We begin with the raw amino-acid sequence, 366 residues long: ABI gene family member 3 (366 aa).

Positions 33 to 61 (CEDNYVQATDKRKALEETMAFTTQALASV) form a coiled coil. Positions 161 to 195 (SRTGTLSRKSIKAPATPASATLGRPPRIPEPVHLP) are disordered. Phosphoserine occurs at positions 213 and 216. The interval 215-302 (GSAEGVGGAP…PPPGFGPDEP (88 aa)) is disordered. A compositionally biased stretch (pro residues) spans 232–248 (PPAPPLPSSLDPPPPPA). Residues 308-366 (SYLEKVVTLYPYTSQKDNELSFSEGTVICVTRRYSDGWCEGVSSEGTGFFPGNYVEPSC) form the SH3 domain. The residue at position 342 (serine 342) is a Phosphoserine.

The protein belongs to the ABI family. May interact with PAK1 and PAK2. Probably interacts with TARSH. Expressed in heart, lung, liver, pancreas, kidney, placenta and at low levels in brain and skeletal muscle.

It localises to the cytoplasm. In terms of biological role, may inhibit tumor metastasis. In vitro, reduces cell motility. The polypeptide is ABI gene family member 3 (ABI3) (Homo sapiens (Human)).